A 171-amino-acid polypeptide reads, in one-letter code: Methyl-coenzyme M reductase operon protein D (171 aa).

As to quaternary structure, MCR is composed of three subunits: alpha, beta, and gamma. The function of proteins C and D is not known.

The chain is Methyl-coenzyme M reductase operon protein D (mcrD) from Methanosarcina barkeri (strain Fusaro / DSM 804).